The sequence spans 241 residues: Beta-nerve growth factor (241 aa).

An N-terminal signal peptide occupies residues 1–18 (MSMLFYTLITAFLIGVQA). Positions 19–121 (EPYTDSNVPE…SFNRTHRSKR (103 aa)) are excised as a propeptide. N69, N114, and N166 each carry an N-linked (GlcNAc...) asparagine glycan. Disulfide bonds link C136-C201, C179-C229, and C189-C231. A 1-acyl-sn-glycero-3-phospho-(1D-myo-inositol)-binding residues include Y173 and K209. K209 contributes to the a 1-acyl-sn-glycero-3-phospho-L-serine binding site.

Belongs to the NGF-beta family. Homodimer. The homodimer interacts with a single NTRK1 chain. The homodimer interacts with a single NGFR chain. The NGF dimer interacts with a single SORCS2 chain (via extracellular domain). The NGF precursor (proNGF) binds to a receptor complex formed by SORT1 and NGFR, which leads to NGF endocytosis. Both mature NGF and the immature NGF precursor (proNGF) interact with SORCS2 and with the heterodimer formed by SORCS2 and NGFR (via extracellular domains). The NGF precursor (proNGF) has much higher affinity for SORCS2 than mature NGF. The NGF precursor (proNGF) has much higher affinity for SORT1 than mature NGF. Interacts with ADAM10 in a divalent cation-dependent manner. Interacts with SORCS3. In terms of tissue distribution, detected in the granule and pyramidal cell layer in the hippocampus.

The protein resides in the secreted. Its subcellular location is the endosome lumen. Functionally, nerve growth factor is important for the development and maintenance of the sympathetic and sensory nervous systems. Extracellular ligand for the NTRK1 and NGFR receptors, activates cellular signaling cascades to regulate neuronal proliferation, differentiation and survival. The immature NGF precursor (proNGF) functions as a ligand for the heterodimeric receptor formed by SORCS2 and NGFR, and activates cellular signaling cascades that lead to inactivation of RAC1 and/or RAC2, reorganization of the actin cytoskeleton and neuronal growth cone collapse. In contrast to mature NGF, the precursor form (proNGF) promotes neuronal apoptosis (in vitro). Inhibits metalloproteinase-dependent proteolysis of platelet glycoprotein VI. Binds lysophosphatidylinositol and lysophosphatidylserine between the two chains of the homodimer. The lipid-bound form promotes histamine relase from mast cells, contrary to the lipid-free form. This chain is Beta-nerve growth factor (Ngf), found in Rattus norvegicus (Rat).